The sequence spans 191 residues: Protein YceI (191 aa).

A signal peptide spans 1-22; sequence MKKSLLGLTFASLMFSAGSAVA.

The protein belongs to the UPF0312 family. Type 1 subfamily.

The protein localises to the periplasm. In Escherichia coli O17:K52:H18 (strain UMN026 / ExPEC), this protein is Protein YceI.